Here is a 612-residue protein sequence, read N- to C-terminus: Glutamine--fructose-6-phosphate aminotransferase [isomerizing] (612 aa).

The active-site Nucleophile; for GATase activity is the Cys2. In terms of domain architecture, Glutamine amidotransferase type-2 spans 2–217; sequence CGIVGGVAER…EGDIARLTRD (216 aa). SIS domains are found at residues 283 to 428 and 461 to 602; these read AEAD…VKEQ and LSEL…VDQP. Lys607 functions as the For Fru-6P isomerization activity in the catalytic mechanism.

Homodimer.

It is found in the cytoplasm. It carries out the reaction D-fructose 6-phosphate + L-glutamine = D-glucosamine 6-phosphate + L-glutamate. Its function is as follows. Catalyzes the first step in hexosamine metabolism, converting fructose-6P into glucosamine-6P using glutamine as a nitrogen source. The polypeptide is Glutamine--fructose-6-phosphate aminotransferase [isomerizing] (Acinetobacter baylyi (strain ATCC 33305 / BD413 / ADP1)).